Consider the following 184-residue polypeptide: Ribose 1,5-bisphosphate phosphokinase PhnN (184 aa).

11–18 (GPSGAGKD) serves as a coordination point for ATP.

The protein belongs to the ribose 1,5-bisphosphokinase family.

The catalysed reaction is alpha-D-ribose 1,5-bisphosphate + ATP = 5-phospho-alpha-D-ribose 1-diphosphate + ADP. Its pathway is metabolic intermediate biosynthesis; 5-phospho-alpha-D-ribose 1-diphosphate biosynthesis; 5-phospho-alpha-D-ribose 1-diphosphate from D-ribose 5-phosphate (route II): step 3/3. Functionally, catalyzes the phosphorylation of ribose 1,5-bisphosphate to 5-phospho-D-ribosyl alpha-1-diphosphate (PRPP). In Burkholderia mallei (strain SAVP1), this protein is Ribose 1,5-bisphosphate phosphokinase PhnN.